A 176-amino-acid chain; its full sequence is NAD(P)H-quinone oxidoreductase subunit 6, chloroplastic (176 aa).

5 consecutive transmembrane segments (helical) span residues F10 to A30, P32 to L52, A61 to I81, L92 to I112, and F152 to A172.

Belongs to the complex I subunit 6 family. In terms of assembly, NDH is composed of at least 16 different subunits, 5 of which are encoded in the nucleus.

It is found in the plastid. The protein localises to the chloroplast thylakoid membrane. The catalysed reaction is a plastoquinone + NADH + (n+1) H(+)(in) = a plastoquinol + NAD(+) + n H(+)(out). It catalyses the reaction a plastoquinone + NADPH + (n+1) H(+)(in) = a plastoquinol + NADP(+) + n H(+)(out). Functionally, NDH shuttles electrons from NAD(P)H:plastoquinone, via FMN and iron-sulfur (Fe-S) centers, to quinones in the photosynthetic chain and possibly in a chloroplast respiratory chain. The immediate electron acceptor for the enzyme in this species is believed to be plastoquinone. Couples the redox reaction to proton translocation, and thus conserves the redox energy in a proton gradient. This chain is NAD(P)H-quinone oxidoreductase subunit 6, chloroplastic (ndhG), found in Helianthus annuus (Common sunflower).